Reading from the N-terminus, the 245-residue chain is Phosphoribosylaminoimidazole-succinocarboxamide synthase (245 aa).

The protein belongs to the SAICAR synthetase family.

The catalysed reaction is 5-amino-1-(5-phospho-D-ribosyl)imidazole-4-carboxylate + L-aspartate + ATP = (2S)-2-[5-amino-1-(5-phospho-beta-D-ribosyl)imidazole-4-carboxamido]succinate + ADP + phosphate + 2 H(+). It participates in purine metabolism; IMP biosynthesis via de novo pathway; 5-amino-1-(5-phospho-D-ribosyl)imidazole-4-carboxamide from 5-amino-1-(5-phospho-D-ribosyl)imidazole-4-carboxylate: step 1/2. The chain is Phosphoribosylaminoimidazole-succinocarboxamide synthase from Trichormus variabilis (strain ATCC 29413 / PCC 7937) (Anabaena variabilis).